Consider the following 354-residue polypeptide: Cysteine proteinase 1 (354 aa).

The signal sequence occupies residues methionine 1–alanine 24. A propeptide spans leucine 25 to serine 125 (activation peptide). 3 disulfides stabilise this stretch: cysteine 150–cysteine 191, cysteine 184–cysteine 229, and cysteine 282–cysteine 330. Cysteine 153 is an active-site residue. An N-linked (GlcNAc...) asparagine glycan is attached at asparagine 208. Catalysis depends on residues histidine 289 and asparagine 309.

Belongs to the peptidase C1 family.

In terms of biological role, the cysteine proteinases have a potential role in host-parasite interaction and virulence. The protein is Cysteine proteinase 1 (CYS1) of Leishmania pifanoi.